A 318-amino-acid chain; its full sequence is DNA polymerase IV (318 aa).

The UmuC domain maps to 6 to 186 (IIHIDMDAFY…LPLGKIPGVG (181 aa)). Mg(2+) is bound by residues Asp10 and Asp104. Glu105 is an active-site residue.

This sequence belongs to the DNA polymerase type-Y family. In terms of assembly, monomer. Mg(2+) serves as cofactor.

Its subcellular location is the cytoplasm. The enzyme catalyses DNA(n) + a 2'-deoxyribonucleoside 5'-triphosphate = DNA(n+1) + diphosphate. Its function is as follows. Poorly processive, error-prone DNA polymerase involved in untargeted mutagenesis. Copies undamaged DNA at stalled replication forks, which arise in vivo from mismatched or misaligned primer ends. These misaligned primers can be extended by PolIV. Exhibits no 3'-5' exonuclease (proofreading) activity. May be involved in translesional synthesis, in conjunction with the beta clamp from PolIII. The protein is DNA polymerase IV of Neisseria meningitidis serogroup B (strain ATCC BAA-335 / MC58).